A 104-amino-acid chain; its full sequence is Small ribosomal subunit protein uS10 (104 aa).

This sequence belongs to the universal ribosomal protein uS10 family. Part of the 30S ribosomal subunit.

Its function is as follows. Involved in the binding of tRNA to the ribosomes. The polypeptide is Small ribosomal subunit protein uS10 (Albidiferax ferrireducens (strain ATCC BAA-621 / DSM 15236 / T118) (Rhodoferax ferrireducens)).